Reading from the N-terminus, the 1184-residue chain is DNA-directed RNA polymerase subunit beta (1184 aa).

Belongs to the RNA polymerase beta chain family. The RNAP catalytic core consists of 2 alpha, 1 beta, 1 beta' and 1 omega subunit. When a sigma factor is associated with the core the holoenzyme is formed, which can initiate transcription.

The catalysed reaction is RNA(n) + a ribonucleoside 5'-triphosphate = RNA(n+1) + diphosphate. Its function is as follows. DNA-dependent RNA polymerase catalyzes the transcription of DNA into RNA using the four ribonucleoside triphosphates as substrates. The chain is DNA-directed RNA polymerase subunit beta from Fusobacterium nucleatum subsp. nucleatum (strain ATCC 25586 / DSM 15643 / BCRC 10681 / CIP 101130 / JCM 8532 / KCTC 2640 / LMG 13131 / VPI 4355).